Here is a 490-residue protein sequence, read N- to C-terminus: Betaine aldehyde dehydrogenase (490 aa).

K(+) contacts are provided by Ile27 and Asp93. 150 to 152 (GAW) is an NAD(+) binding site. The active-site Charge relay system is the Lys162. 176 to 179 (KPSE) lines the NAD(+) pocket. Residue Val180 coordinates K(+). Position 230 to 233 (230 to 233 (GTTT)) interacts with NAD(+). Leu246 lines the K(+) pocket. Glu252 acts as the Proton acceptor in catalysis. NAD(+) is bound by residues Gly254, Cys286, and Glu387. The active-site Nucleophile is Cys286. Cys286 carries the post-translational modification Cysteine sulfenic acid (-SOH). Lys457 and Gly460 together coordinate K(+). The Charge relay system role is filled by Glu464.

It belongs to the aldehyde dehydrogenase family. As to quaternary structure, dimer of dimers. Requires K(+) as cofactor.

The enzyme catalyses betaine aldehyde + NAD(+) + H2O = glycine betaine + NADH + 2 H(+). It functions in the pathway amine and polyamine biosynthesis; betaine biosynthesis via choline pathway; betaine from betaine aldehyde: step 1/1. In terms of biological role, involved in the biosynthesis of the osmoprotectant glycine betaine. Catalyzes the irreversible oxidation of betaine aldehyde to the corresponding acid. This is Betaine aldehyde dehydrogenase from Pseudomonas putida (strain W619).